The chain runs to 152 residues: 3-hydroxyacyl-[acyl-carrier-protein] dehydratase FabZ (152 aa).

Histidine 58 is an active-site residue.

The protein belongs to the thioester dehydratase family. FabZ subfamily.

It localises to the cytoplasm. It carries out the reaction a (3R)-hydroxyacyl-[ACP] = a (2E)-enoyl-[ACP] + H2O. Its function is as follows. Involved in unsaturated fatty acids biosynthesis. Catalyzes the dehydration of short chain beta-hydroxyacyl-ACPs and long chain saturated and unsaturated beta-hydroxyacyl-ACPs. The polypeptide is 3-hydroxyacyl-[acyl-carrier-protein] dehydratase FabZ (Prochlorococcus marinus (strain MIT 9515)).